The sequence spans 473 residues: Uronate isomerase (473 aa).

The protein belongs to the metallo-dependent hydrolases superfamily. Uronate isomerase family.

The enzyme catalyses D-glucuronate = D-fructuronate. The catalysed reaction is aldehydo-D-galacturonate = keto-D-tagaturonate. It functions in the pathway carbohydrate metabolism; pentose and glucuronate interconversion. This is Uronate isomerase from Bacillus licheniformis (strain ATCC 14580 / DSM 13 / JCM 2505 / CCUG 7422 / NBRC 12200 / NCIMB 9375 / NCTC 10341 / NRRL NRS-1264 / Gibson 46).